The following is a 494-amino-acid chain: MTQYVSNTRSGEQEAFEPDDPENVLVYTCGLTVSDDAHLGHARLWVQSDVMTRWLSHAGYGVRHVQNVTDVNEKIVARVGADGLGDTEAAVAAHYTQSVIDDMRALNLARADVYPRVSEHVPEIIDLIGDLVDAGYAYEAGGSVYFDVRRFEEYGALSGQQVDELDPQGPDAEQAEKRHPADFALWKAGGVSPDDANTHRDDELPPLDGERGQTWASPWGEGRPGWHIECSAMAMTHLDDHIDIHVGGQDLVFPHHENEIAQSEAASGERFADHWLHVRLLETDGEKMSSSLGNFFTVSNAVAERGPNVVRMLLVSTSYTQRQTYSEATVSEATQRWERLQRAHERAADAIDSVAAHAKPADDALRTAVADARGEFAAAMRADFNTRAAVSALLELASAVNRHVDGTDTYDYQGLHDAVDAFETLGGDVLGLQFDDGAGEDAVSLADDVIDLVLDVREQERTAGNYERADDLRDRLEALGVSVEDTDDGATVRR.

Position 29 (Cys29) interacts with Zn(2+). The short motif at 31-41 (LTVSDDAHLGH) is the 'HIGH' region element. A disordered region spans residues 187–220 (KAGGVSPDDANTHRDDELPPLDGERGQTWASPWG). Positions 196–211 (ANTHRDDELPPLDGER) are enriched in basic and acidic residues. Residues Cys230, His255, and Glu259 each coordinate Zn(2+). The 'KMSKS' region motif lies at 287 to 291 (KMSSS).

This sequence belongs to the class-I aminoacyl-tRNA synthetase family. It depends on Zn(2+) as a cofactor.

It localises to the cytoplasm. The enzyme catalyses tRNA(Cys) + L-cysteine + ATP = L-cysteinyl-tRNA(Cys) + AMP + diphosphate. In Halobacterium salinarum (strain ATCC 700922 / JCM 11081 / NRC-1) (Halobacterium halobium), this protein is Cysteine--tRNA ligase.